The following is a 246-amino-acid chain: Uridylate kinase (246 aa).

16-19 (KLGG) provides a ligand contact to ATP. Gly57 is a UMP binding site. ATP-binding residues include Gly58 and Arg62. Residues Asp77 and 138–145 (MGMPYFST) each bind UMP. 2 residues coordinate ATP: Tyr171 and Asp174.

It belongs to the UMP kinase family. In terms of assembly, homohexamer.

The protein localises to the cytoplasm. The catalysed reaction is UMP + ATP = UDP + ADP. Its pathway is pyrimidine metabolism; CTP biosynthesis via de novo pathway; UDP from UMP (UMPK route): step 1/1. With respect to regulation, inhibited by UTP. In terms of biological role, catalyzes the reversible phosphorylation of UMP to UDP. The chain is Uridylate kinase from Corynebacterium jeikeium (strain K411).